Here is a 250-residue protein sequence, read N- to C-terminus: Probable transcriptional regulatory protein ROP_68700 (250 aa).

The protein belongs to the TACO1 family.

It localises to the cytoplasm. This is Probable transcriptional regulatory protein ROP_68700 from Rhodococcus opacus (strain B4).